The primary structure comprises 165 residues: SsrA-binding protein (165 aa).

The segment at 141-165 (KLHDKRQDEKRKQADREVKSALARY) is disordered. Basic and acidic residues predominate over residues 145–159 (KRQDEKRKQADREVK).

This sequence belongs to the SmpB family.

The protein resides in the cytoplasm. Its function is as follows. Required for rescue of stalled ribosomes mediated by trans-translation. Binds to transfer-messenger RNA (tmRNA), required for stable association of tmRNA with ribosomes. tmRNA and SmpB together mimic tRNA shape, replacing the anticodon stem-loop with SmpB. tmRNA is encoded by the ssrA gene; the 2 termini fold to resemble tRNA(Ala) and it encodes a 'tag peptide', a short internal open reading frame. During trans-translation Ala-aminoacylated tmRNA acts like a tRNA, entering the A-site of stalled ribosomes, displacing the stalled mRNA. The ribosome then switches to translate the ORF on the tmRNA; the nascent peptide is terminated with the 'tag peptide' encoded by the tmRNA and targeted for degradation. The ribosome is freed to recommence translation, which seems to be the essential function of trans-translation. This chain is SsrA-binding protein, found in Prochlorococcus marinus (strain MIT 9313).